Here is a 474-residue protein sequence, read N- to C-terminus: Protein nucleotidyltransferase YdiU (474 aa).

Residues G89, G91, R92, K112, D124, G125, R175, and R182 each coordinate ATP. D256 serves as the catalytic Proton acceptor. Residues N257 and D266 each contribute to the Mg(2+) site. D266 is an ATP binding site.

Belongs to the SELO family. Requires Mg(2+) as cofactor. Mn(2+) serves as cofactor.

It carries out the reaction L-seryl-[protein] + ATP = 3-O-(5'-adenylyl)-L-seryl-[protein] + diphosphate. It catalyses the reaction L-threonyl-[protein] + ATP = 3-O-(5'-adenylyl)-L-threonyl-[protein] + diphosphate. The enzyme catalyses L-tyrosyl-[protein] + ATP = O-(5'-adenylyl)-L-tyrosyl-[protein] + diphosphate. The catalysed reaction is L-histidyl-[protein] + UTP = N(tele)-(5'-uridylyl)-L-histidyl-[protein] + diphosphate. It carries out the reaction L-seryl-[protein] + UTP = O-(5'-uridylyl)-L-seryl-[protein] + diphosphate. It catalyses the reaction L-tyrosyl-[protein] + UTP = O-(5'-uridylyl)-L-tyrosyl-[protein] + diphosphate. Its function is as follows. Nucleotidyltransferase involved in the post-translational modification of proteins. It can catalyze the addition of adenosine monophosphate (AMP) or uridine monophosphate (UMP) to a protein, resulting in modifications known as AMPylation and UMPylation. The polypeptide is Protein nucleotidyltransferase YdiU (Corynebacterium glutamicum (strain ATCC 13032 / DSM 20300 / JCM 1318 / BCRC 11384 / CCUG 27702 / LMG 3730 / NBRC 12168 / NCIMB 10025 / NRRL B-2784 / 534)).